Reading from the N-terminus, the 218-residue chain is N-(5'-phosphoribosyl)anthranilate isomerase (218 aa).

Belongs to the TrpF family.

It carries out the reaction N-(5-phospho-beta-D-ribosyl)anthranilate = 1-(2-carboxyphenylamino)-1-deoxy-D-ribulose 5-phosphate. The protein operates within amino-acid biosynthesis; L-tryptophan biosynthesis; L-tryptophan from chorismate: step 3/5. The chain is N-(5'-phosphoribosyl)anthranilate isomerase from Desulfatibacillum aliphaticivorans.